Here is a 448-residue protein sequence, read N- to C-terminus: Putative RNA-ligase (448 aa).

It belongs to the asfivirus M448R family.

The protein localises to the virion. The chain is Putative RNA-ligase from Ornithodoros (relapsing fever ticks).